A 522-amino-acid chain; its full sequence is Calcium-dependent protein kinase 14 (522 aa).

Composition is skewed to low complexity over residues 1–12 and 19–45; these read MGNCCPPGSSSE and SSGS…AAPA. The tract at residues 1-58 is disordered; the sequence is MGNCCPPGSSSEPDPPPASSGSSRPAGSAGAAASPATISPSAAPAPAKPPAPIGPVLG. A lipid anchor (N-myristoyl glycine) is attached at G2. In terms of domain architecture, Protein kinase spans 68–326; it reads YTVGKELGRG…AYDVLNHPWI (259 aa). ATP contacts are provided by residues 74-82 and K97; that span reads LGRGQFGVT. The Proton acceptor role is filled by D192. The interval 332 to 362 is autoinhibitory domain; sequence APDTPLDNAVLGRLKQFRAMNQFKKAALRVI. EF-hand domains lie at 369–404, 405–440, 441–476, and 480–511; these read EEIR…KGTK, LTEA…MNRM, DREE…KGLM, and EIKD…GDPE. Ca(2+)-binding residues include D382, D384, S386, T388, E393, D418, D420, N422, T424, E429, D454, D456, S458, Y460, E465, D489, D491, D493, R495, and E500.

It belongs to the protein kinase superfamily. Ser/Thr protein kinase family. CDPK subfamily.

Its subcellular location is the membrane. The enzyme catalyses L-seryl-[protein] + ATP = O-phospho-L-seryl-[protein] + ADP + H(+). It catalyses the reaction L-threonyl-[protein] + ATP = O-phospho-L-threonyl-[protein] + ADP + H(+). Activated by calcium. Autophosphorylation may play an important role in the regulation of the kinase activity. In terms of biological role, may play a role in signal transduction pathways that involve calcium as a second messenger. The polypeptide is Calcium-dependent protein kinase 14 (Oryza sativa subsp. japonica (Rice)).